Consider the following 316-residue polypeptide: Large ribosomal subunit protein uL10 (316 aa).

The segment at 289-316 (AAAAAPAKEAPKEESEESDEDMGFGLFD) is disordered.

Belongs to the universal ribosomal protein uL10 family. In terms of assembly, P0 forms a pentameric complex by interaction with dimers of P1 and P2. Post-translationally, phosphorylated.

The protein resides in the nucleus. It is found in the cytoplasm. In terms of biological role, ribosomal protein P0 is the functional equivalent of E.coli protein L10. This chain is Large ribosomal subunit protein uL10 (RPLP0), found in Gallus gallus (Chicken).